Here is a 504-residue protein sequence, read N- to C-terminus: Xylose import ATP-binding protein XylG (504 aa).

ABC transporter domains lie at 5–242 and 259–500; these read LEMK…VGRE and LRVE…VMEA. 37 to 44 is an ATP binding site; sequence GENGSGKS.

This sequence belongs to the ABC transporter superfamily. Xylose importer (TC 3.A.1.2.4) family. As to quaternary structure, the complex is composed of two ATP-binding proteins (XylG), two transmembrane proteins (XylH) and a solute-binding protein (XylF).

It is found in the cell inner membrane. The catalysed reaction is D-xylose(out) + ATP + H2O = D-xylose(in) + ADP + phosphate + H(+). Part of the ABC transporter complex XylFGH involved in xylose import. Responsible for energy coupling to the transport system. The polypeptide is Xylose import ATP-binding protein XylG (Histophilus somni (strain 129Pt) (Haemophilus somnus)).